Consider the following 261-residue polypeptide: 4-hydroxy-tetrahydrodipicolinate reductase (261 aa).

NAD(+) is bound at residue 9 to 14 (GCLGRM). NADP(+) is bound at residue Arg-36. Residues 97–99 (GTT) and 118–121 (SANM) contribute to the NAD(+) site. His-151 serves as the catalytic Proton donor/acceptor. His-152 lines the (S)-2,3,4,5-tetrahydrodipicolinate pocket. The active-site Proton donor is Lys-155. 161-162 (GT) contacts (S)-2,3,4,5-tetrahydrodipicolinate.

It belongs to the DapB family.

Its subcellular location is the cytoplasm. The enzyme catalyses (S)-2,3,4,5-tetrahydrodipicolinate + NAD(+) + H2O = (2S,4S)-4-hydroxy-2,3,4,5-tetrahydrodipicolinate + NADH + H(+). The catalysed reaction is (S)-2,3,4,5-tetrahydrodipicolinate + NADP(+) + H2O = (2S,4S)-4-hydroxy-2,3,4,5-tetrahydrodipicolinate + NADPH + H(+). The protein operates within amino-acid biosynthesis; L-lysine biosynthesis via DAP pathway; (S)-tetrahydrodipicolinate from L-aspartate: step 4/4. Catalyzes the conversion of 4-hydroxy-tetrahydrodipicolinate (HTPA) to tetrahydrodipicolinate. This is 4-hydroxy-tetrahydrodipicolinate reductase from Wolbachia pipientis wMel.